A 156-amino-acid chain; its full sequence is Small ribosomal subunit protein uS7 (156 aa).

The protein belongs to the universal ribosomal protein uS7 family. As to quaternary structure, part of the 30S ribosomal subunit. Contacts proteins S9 and S11.

Its function is as follows. One of the primary rRNA binding proteins, it binds directly to 16S rRNA where it nucleates assembly of the head domain of the 30S subunit. Is located at the subunit interface close to the decoding center, probably blocks exit of the E-site tRNA. The polypeptide is Small ribosomal subunit protein uS7 (Synechococcus sp. (strain WH7803)).